The primary structure comprises 400 residues: CCA-adding enzyme (400 aa).

Gly28 and Arg31 together coordinate ATP. CTP-binding residues include Gly28 and Arg31. 2 residues coordinate Mg(2+): Asp41 and Asp43. Residues Arg112, Asp155, Arg158, Arg161, and Arg164 each coordinate ATP. CTP-binding residues include Arg112, Asp155, Arg158, Arg161, and Arg164.

This sequence belongs to the tRNA nucleotidyltransferase/poly(A) polymerase family. Bacterial CCA-adding enzyme type 3 subfamily. As to quaternary structure, homodimer. It depends on Mg(2+) as a cofactor.

It carries out the reaction a tRNA precursor + 2 CTP + ATP = a tRNA with a 3' CCA end + 3 diphosphate. The catalysed reaction is a tRNA with a 3' CCA end + 2 CTP + ATP = a tRNA with a 3' CCACCA end + 3 diphosphate. Catalyzes the addition and repair of the essential 3'-terminal CCA sequence in tRNAs without using a nucleic acid template. Adds these three nucleotides in the order of C, C, and A to the tRNA nucleotide-73, using CTP and ATP as substrates and producing inorganic pyrophosphate. tRNA 3'-terminal CCA addition is required both for tRNA processing and repair. Also involved in tRNA surveillance by mediating tandem CCA addition to generate a CCACCA at the 3' terminus of unstable tRNAs. While stable tRNAs receive only 3'-terminal CCA, unstable tRNAs are marked with CCACCA and rapidly degraded. This chain is CCA-adding enzyme, found in Staphylococcus aureus (strain bovine RF122 / ET3-1).